We begin with the raw amino-acid sequence, 125 residues long: Gem-associated protein 7 (125 aa).

The residue at position 1 (Met-1) is an N-acetylmethionine. The 29-residue stretch at 1–29 (MQTPLATPVPVLRLPRGPDGSNRGFAPDG) folds into the SUZ-C domain. The tract at residues 1-52 (MQTPLATPVPVLRLPRGPDGSNRGFAPDGRRAPPKPEVPEPPESRESWEQQA) is disordered. Thr-3 bears the Phosphothreonine mark. In terms of domain architecture, Sm spans 59–125 (RYLRSLLAMV…SDIISYTFKP (67 aa)).

The protein belongs to the gemin-7 family. As to quaternary structure, part of the core SMN complex that contains SMN1, GEMIN2/SIP1, DDX20/GEMIN3, GEMIN4, GEMIN5, GEMIN6, GEMIN7, GEMIN8 and STRAP/UNRIP. Part of the SMN-Sm complex that contains SMN1, GEMIN2/SIP1, DDX20/GEMIN3, GEMIN4, GEMIN5, GEMIN6, GEMIN7, GEMIN8, STRAP/UNRIP and the Sm proteins SNRPB, SNRPD1, SNRPD2, SNRPD3, SNRPE, SNRPF and SNRPG. Interacts with GEMIN6; the interaction is direct. Interacts with STRAP/UNRIP; the interaction is direct. Interacts with GEMIN8; the interaction is direct. Interacts with SNRPB, SNRPD2, SNRPD3 and SNRPE; the interaction is direct.

The protein localises to the nucleus. It is found in the nucleoplasm. The protein resides in the gem. Its subcellular location is the cytoplasm. Functionally, the SMN complex catalyzes the assembly of small nuclear ribonucleoproteins (snRNPs), the building blocks of the spliceosome, and thereby plays an important role in the splicing of cellular pre-mRNAs. Most spliceosomal snRNPs contain a common set of Sm proteins SNRPB, SNRPD1, SNRPD2, SNRPD3, SNRPE, SNRPF and SNRPG that assemble in a heptameric protein ring on the Sm site of the small nuclear RNA to form the core snRNP (Sm core). In the cytosol, the Sm proteins SNRPD1, SNRPD2, SNRPE, SNRPF and SNRPG are trapped in an inactive 6S pICln-Sm complex by the chaperone CLNS1A that controls the assembly of the core snRNP. To assemble core snRNPs, the SMN complex accepts the trapped 5Sm proteins from CLNS1A forming an intermediate. Binding of snRNA inside 5Sm triggers eviction of the SMN complex, thereby allowing binding of SNRPD3 and SNRPB to complete assembly of the core snRNP. The polypeptide is Gem-associated protein 7 (GEMIN7) (Bos taurus (Bovine)).